Here is a 399-residue protein sequence, read N- to C-terminus: Protein DDI1 homolog 2 (399 aa).

Residues 1–81 (MLLTVYCVRR…VILRQKENAD (81 aa)) enclose the Ubiquitin-like domain. Residues 99–134 (IAVPGTSNPQQRQLPRTQAQHSSPGEMASSPQGLDN) form a disordered region. Positions 103 to 131 (GTSNPQQRQLPRTQAQHSSPGEMASSPQG) are enriched in polar residues. T104 carries the post-translational modification Phosphothreonine. S121, S128, S150, and S194 each carry phosphoserine. D252 is a catalytic residue. Positions 376-395 (EEIADQELAEAIQKSAEDAE) match the Ubiquitin-binding motif.

The protein belongs to the DDI1 family. Homodimer.

It is found in the cytoplasm. It localises to the cytosol. The protein resides in the chromosome. Its function is as follows. Aspartic protease that mediates the cleavage of NFE2L1/NRF1 at 'Leu-104', thereby promoting release of NFE2L1/NRF1 from the endoplasmic reticulum membrane. Ubiquitination of NFE2L1/NRF1 is a prerequisite for cleavage, suggesting that DDI2 specifically recognizes and binds ubiquitinated NFE2L1/NRF1. Seems to act as a proteasomal shuttle which links the proteasome and replication fork proteins like RTF2. Required, with DDI1, for cellular survival following replication stress. Together or redudantly with DDI1, removes RTF2 from stalled forks to allow cell cycle progression after replication stress and maintains genome integrity. In Mus musculus (Mouse), this protein is Protein DDI1 homolog 2.